Reading from the N-terminus, the 605-residue chain is Alanine--tRNA ligase (605 aa).

Residues H463, H467, C565, and H569 each coordinate Zn(2+).

Belongs to the class-II aminoacyl-tRNA synthetase family. Zn(2+) is required as a cofactor.

The protein localises to the cytoplasm. It catalyses the reaction tRNA(Ala) + L-alanine + ATP = L-alanyl-tRNA(Ala) + AMP + diphosphate. Catalyzes the attachment of alanine to tRNA(Ala) in a two-step reaction: alanine is first activated by ATP to form Ala-AMP and then transferred to the acceptor end of tRNA(Ala). Also edits incorrectly charged Ser-tRNA(Ala) and Gly-tRNA(Ala) via its editing domain. The polypeptide is Alanine--tRNA ligase (alaS) (Treponema pallidum (strain Nichols)).